The following is an 85-amino-acid chain: MEERNLRKTRVGVVVSDKMDKTIVVAVRDNVRHPLYNKIVKKTYKLKAHDEKNDAKIGDTVRVMETRPLSKDKRWRLVEIMERAK.

The protein belongs to the universal ribosomal protein uS17 family. As to quaternary structure, part of the 30S ribosomal subunit.

One of the primary rRNA binding proteins, it binds specifically to the 5'-end of 16S ribosomal RNA. In Agathobacter rectalis (strain ATCC 33656 / DSM 3377 / JCM 17463 / KCTC 5835 / VPI 0990) (Eubacterium rectale), this protein is Small ribosomal subunit protein uS17.